The sequence spans 317 residues: uncharacterized protein (317 aa).

This sequence to M.avium MAV169.

This is an uncharacterized protein from Mycobacterium tuberculosis (strain CDC 1551 / Oshkosh).